A 159-amino-acid chain; its full sequence is Small ribosomal subunit protein bS6 (159 aa).

2 non-standard amino acids (selenocysteine) are found at residues Sec-46 and Sec-52.

Belongs to the bacterial ribosomal protein bS6 family.

Functionally, binds together with bS18 to 16S ribosomal RNA. The sequence is that of Small ribosomal subunit protein bS6 from Desulfotalea psychrophila (strain LSv54 / DSM 12343).